Reading from the N-terminus, the 530-residue chain is UDP-glucuronosyltransferase 1A7 (530 aa).

The N-terminal stretch at 1-25 (MARAGWTGLLPLYVCLLLTCGFAKA) is a signal peptide. Residues asparagine 71, asparagine 292, and asparagine 344 are each glycosylated (N-linked (GlcNAc...) asparagine). The helical transmembrane segment at 488-504 (VIGFLLAVVLTVAFITF) threads the bilayer.

Belongs to the UDP-glycosyltransferase family. In terms of assembly, homodimer. Homooligomer. Interacts with UGT1A1, UGT1A3, UGT1A4, UGT1A6, UGT1A8, UGT1A9 and UGT1A10 to form heterodimers. Isoform 1 interacts with isoform 2/i2 suggesting that oligomerization is involved in negative regulation of transferase activity by isoform 2. Isoform 1 also interacts with respective i2 isoforms of UGT1A1, UGT1A3, UGT1A4, UGT1A6, UGT1A8, UGT1A9 and UGT1A10. Liver and gastric tissue. Isoform 1 and isoform 2 are expressed in esophagus. Neither isoform is expressed in liver, kidney, colon and small intestine.

It localises to the endoplasmic reticulum membrane. The catalysed reaction is glucuronate acceptor + UDP-alpha-D-glucuronate = acceptor beta-D-glucuronoside + UDP + H(+). The enzyme catalyses 17alpha-estradiol + UDP-alpha-D-glucuronate = 17alpha-estradiol 3-O-(beta-D-glucuronate) + UDP + H(+). It catalyses the reaction prunetin + UDP-alpha-D-glucuronate = prunetin-5-O-beta-D-glucuronide + UDP. It carries out the reaction 5-epi-5-F2t-IsoP + UDP-alpha-D-glucuronate = 5-epi-5-F2t-IsoP-glucuronide + UDP + H(+). The catalysed reaction is (E)-ferulate + UDP-alpha-D-glucuronate = (E)-ferulic acid beta-D-glucuronate ester + UDP. The enzyme catalyses candesartan + UDP-alpha-D-glucuronate = candesartan O-beta-D-glucuronoside + UDP. It catalyses the reaction SN-38 + UDP-alpha-D-glucuronate = SN-38 O-beta-D-glucuronide + UDP + H(+). It carries out the reaction mycophenolate + UDP-alpha-D-glucuronate = mycophenolate 7-O-beta-D-glucuronide + UDP + H(+). UDP-glucuronosyltransferase (UGT) that catalyzes phase II biotransformation reactions in which lipophilic substrates are conjugated with glucuronic acid to increase the metabolite's water solubility, thereby facilitating excretion into either the urine or bile. Essential for the elimination and detoxification of drugs, xenobiotics and endogenous compounds. Catalyzes the glucuronidation of endogenous estrogen hormone epiestradiol. Involved in the glucuronidation of F2-isoprostane (5-epi-5-F2t-IsoP). Involved in the glucuronidation of the phytochemical ferulic acid at the carboxylic acid group. Also catalyzes the glucuronidation of the isoflavones genistein, daidzein, glycitein, formononetin, biochanin A and prunetin, which are phytoestrogens with anticancer and cardiovascular properties. Involved in the glucuronidation of the AGTR1 angiotensin receptor antagonist caderastan, a drug which can inhibit the effect of angiotensin II. Involved in the biotransformation of 7-ethyl-10-hydroxycamptothecin (SN-38), the pharmacologically active metabolite of the anticancer drug irinotecan. Also metabolizes mycophenolate, an immunosuppressive agent. In terms of biological role, lacks UGT glucuronidation activity but acts as a negative regulator of isoform 1. The chain is UDP-glucuronosyltransferase 1A7 from Homo sapiens (Human).